A 436-amino-acid polypeptide reads, in one-letter code: 3-ketoacyl-CoA thiolase (436 aa).

The active-site Acyl-thioester intermediate is C99. Catalysis depends on proton acceptor residues H392 and C422.

It belongs to the thiolase-like superfamily. Thiolase family. Heterotetramer of two alpha chains (FadJ) and two beta chains (FadI).

The protein localises to the cytoplasm. The enzyme catalyses an acyl-CoA + acetyl-CoA = a 3-oxoacyl-CoA + CoA. The protein operates within lipid metabolism; fatty acid beta-oxidation. Catalyzes the final step of fatty acid oxidation in which acetyl-CoA is released and the CoA ester of a fatty acid two carbons shorter is formed. This is 3-ketoacyl-CoA thiolase from Salmonella heidelberg (strain SL476).